Reading from the N-terminus, the 189-residue chain is Cold-regulated 413 plasma membrane protein 3 (189 aa).

The Extracellular segment spans residues 1 to 24; sequence MENIEYLNEIQAVAGKLIHSYGVP. A helical transmembrane segment spans residues 25–45; sequence VMITLFLRWLASIVAVFLMIL. Topologically, residues 46–55 are cytoplasmic; the sequence is DQTKWKYSNN. The helical transmembrane segment at 56–76 threads the bilayer; that stretch reads IMASLLAPYLFSSLPIVIFQV. Residues 77–79 lie on the Extracellular side of the membrane; it reads LRN. Residues 80–100 form a helical membrane-spanning segment; that stretch reads GVGKWIALLTVILRLFLPNHF. Topologically, residues 101-104 are cytoplasmic; that stretch reads HESL. A helical membrane pass occupies residues 105-125; the sequence is EIPGATILLIVVTPSDIGAIF. Residues 126 to 168 are Extracellular-facing; the sequence is RDDLRYTGGDVCLLTSFYLINKHTKACGGIKNSFTQKDKVTYS. The chain crosses the membrane as a helical span at residues 169–189; that stretch reads ICLWILFVYPILSSFAALFYL.

The protein belongs to the Cold-regulated 413 protein family.

It localises to the cell membrane. This is Cold-regulated 413 plasma membrane protein 3 from Arabidopsis thaliana (Mouse-ear cress).